A 544-amino-acid chain; its full sequence is Nucleosome assembly protein 1-like 3 (544 aa).

2 disordered regions span residues 1–109 and 168–345; these read MAEA…LFLD and PTEE…KKED. Over residues 35–83 the composition is skewed to low complexity; that stretch reads SNSSSSTNSCSSSGSSSSGSSSSSSSSSSSSSSSSSSSSGSSGSSSNGS. Residues 168 to 192 are compositionally biased toward acidic residues; it reads PTEEECEWNSEEEFSGDEEMQDDTP. Composition is skewed to basic and acidic residues over residues 207 to 228, 235 to 277, and 314 to 332; these read CNEKAEVKEEGTHVPEEVPEAK, PKET…KADS, and PAREAQKRVPETRPEEGVN.

The protein belongs to the nucleosome assembly protein (NAP) family. In terms of tissue distribution, expressed in brain.

It is found in the nucleus. The protein resides in the cytoplasm. The sequence is that of Nucleosome assembly protein 1-like 3 (Nap1l3) from Mus musculus (Mouse).